Here is a 605-residue protein sequence, read N- to C-terminus: Elongation factor 4 (605 aa).

Positions 9–192 constitute a tr-type G domain; that stretch reads GMIRNFCIIA…AIVQRIPAPA (184 aa). GTP is bound by residues 21–26 and 139–142; these read DHGKST and NKID.

This sequence belongs to the TRAFAC class translation factor GTPase superfamily. Classic translation factor GTPase family. LepA subfamily.

It localises to the cell inner membrane. It carries out the reaction GTP + H2O = GDP + phosphate + H(+). Functionally, required for accurate and efficient protein synthesis under certain stress conditions. May act as a fidelity factor of the translation reaction, by catalyzing a one-codon backward translocation of tRNAs on improperly translocated ribosomes. Back-translocation proceeds from a post-translocation (POST) complex to a pre-translocation (PRE) complex, thus giving elongation factor G a second chance to translocate the tRNAs correctly. Binds to ribosomes in a GTP-dependent manner. The protein is Elongation factor 4 of Chlorobaculum parvum (strain DSM 263 / NCIMB 8327) (Chlorobium vibrioforme subsp. thiosulfatophilum).